Here is a 169-residue protein sequence, read N- to C-terminus: Der GTPase-activating protein YihI (169 aa).

Disordered stretches follow at residues 1 to 75 (MKPS…IPLG) and 144 to 169 (GLSY…LRGN). Positions 10–19 (SKGHAKARRK) are enriched in basic residues. The span at 20–30 (TREELDQEARD) shows a compositional bias: basic and acidic residues. The segment covering 31 to 40 (RKRQKKRRGH) has biased composition (basic residues). Residues 49–58 (GNTTSGSKGQ) show a composition bias toward polar residues. Over residues 147–159 (YDDDEEEEEDEKQ) the composition is skewed to acidic residues. Residues 160-169 (EDMMRLLRGN) are compositionally biased toward basic and acidic residues.

This sequence belongs to the YihI family. Interacts with Der.

In terms of biological role, a GTPase-activating protein (GAP) that modifies Der/EngA GTPase function. May play a role in ribosome biogenesis. The sequence is that of Der GTPase-activating protein YihI from Escherichia coli (strain 55989 / EAEC).